A 232-amino-acid polypeptide reads, in one-letter code: Platelet-activating factor acetylhydrolase IB subunit alpha1 (232 aa).

Residues 1 to 20 are disordered; the sequence is MSGEGENPASKPTPVQDVQG. An N-acetylserine modification is found at serine 2. Residue serine 2 is modified to Phosphoserine. Active-site residues include serine 48, aspartate 193, and histidine 196.

Belongs to the 'GDSL' lipolytic enzyme family. Platelet-activating factor acetylhydrolase IB beta/gamma subunits subfamily. In terms of assembly, forms a catalytic dimer which is either homodimer (alpha1/alpha1 homodimer) or heterodimer with PAFAH1B2 (alpha1/alpha2 heterodimer). Component of the cytosolic (PAF-AH (I)) heterotetrameric enzyme, which is composed of PAFAH1B1 (beta), PAFAH1B2 (alpha2) and PAFAH1B3 (alpha1) subunits. The catalytic activity of the enzyme resides in the alpha1 (PAFAH1B3) and alpha2 (PAFAH1B2) subunits, whereas the beta subunit (PAFAH1B1) has regulatory activity. Trimer formation is not essential for the catalytic activity. Interacts with VLDLR; this interaction may modulate the Reelin pathway.

The protein resides in the cytoplasm. The enzyme catalyses a 1-O-alkyl-2-acetyl-sn-glycero-3-phosphocholine + H2O = a 1-O-alkyl-sn-glycero-3-phosphocholine + acetate + H(+). It carries out the reaction 1-O-hexadecyl-2-acetyl-sn-glycero-3-phosphocholine + H2O = 1-O-hexadecyl-sn-glycero-3-phosphocholine + acetate + H(+). It catalyses the reaction 1-O-hexadecyl-2-acetyl-sn-glycero-3-phosphate + H2O = 1-O-hexadecyl-sn-glycero-3-phosphate + acetate + H(+). Its activity is regulated as follows. Beta subunit (PAFAH1B1) inhibits the acetylhydrolase activity of the alpha1/alpha1 catalytic homodimer. In terms of biological role, alpha1 catalytic subunit of the cytosolic type I platelet-activating factor (PAF) acetylhydrolase (PAF-AH (I)) heterotetrameric enzyme that catalyzes the hydrolyze of the acetyl group at the sn-2 position of PAF and its analogs and modulates the action of PAF. The activity and substrate specificity of PAF-AH (I) are affected by its subunit composition. Both alpha1/alpha1 homodimer (PAFAH1B3/PAFAH1B3 homodimer) and alpha1/alpha2 heterodimer(PAFAH1B3/PAFAH1B2 heterodimer) hydrolyze 1-O-alkyl-2-acetyl-sn-glycero-3-phosphoric acid (AAGPA) more efficiently than PAF, but they have little hydrolytic activity towards 1-O-alkyl-2-acetyl-sn-glycero-3-phosphorylethanolamine (AAGPE). Plays an important role during the development of brain. The sequence is that of Platelet-activating factor acetylhydrolase IB subunit alpha1 from Mus musculus (Mouse).